The chain runs to 164 residues: Small ribosomal subunit protein uS5 (164 aa).

In terms of domain architecture, S5 DRBM spans 10–73 (LEERVVAINR…EDAKKNLIEV (64 aa)).

This sequence belongs to the universal ribosomal protein uS5 family. In terms of assembly, part of the 30S ribosomal subunit. Contacts proteins S4 and S8.

In terms of biological role, with S4 and S12 plays an important role in translational accuracy. Located at the back of the 30S subunit body where it stabilizes the conformation of the head with respect to the body. This Streptococcus gordonii (strain Challis / ATCC 35105 / BCRC 15272 / CH1 / DL1 / V288) protein is Small ribosomal subunit protein uS5.